A 150-amino-acid chain; its full sequence is UPF0506 protein SJCHGC03047 (150 aa).

The N-terminal stretch at 1 to 18 (MNTCIQLLILCLVTLTNS) is a signal peptide. Asn20, Asn48, and Asn110 each carry an N-linked (GlcNAc...) asparagine glycan. Cystine bridges form between Cys116/Cys130, Cys123/Cys134, and Cys129/Cys139.

The protein belongs to the UPF0506 family.

The protein resides in the secreted. The polypeptide is UPF0506 protein SJCHGC03047 (Schistosoma japonicum (Blood fluke)).